Here is a 285-residue protein sequence, read N- to C-terminus: MAIPKLQAYALPESHDIPQNKVDWAFEPQRAALLIHDMQDYFVSFWGENCPMMEQVIANIAALRDYCKQHNIPVYYTAQPKEQSDEDRALLNDMWGPGLTRSPEQQKVVDRLTPDADDTVLVKWRYSAFHRSPLEQMLKESGRNQLIITGVYAHIGCMTTATDAFMRDIKPFMVADALADFSRDEHLMSLKYVAGRSGRVVMTEELLPAPIPASKAALREVILPLLDESDEPFDDDNLIDYGLDSVRMMALAARWRKVHGDIDFVMLAKNPTIDAWWKLLSREVK.

The isochorismatase stretch occupies residues alanine 2–alanine 213. The Carrier domain maps to alanine 209 to valine 284. Mg(2+)-binding residues include aspartate 227, glycine 242, and aspartate 244. Serine 245 carries the O-(pantetheine 4'-phosphoryl)serine modification.

It in the N-terminal section; belongs to the isochorismatase family. As to quaternary structure, proteins EntB, EntD, EntE, and EntF form a multienzyme complex called enterobactin synthase. Homodimer. Also forms a specific pairwise interaction with EntC; this interaction likely facilitates substrate channeling to connect the EntB and EntC active sites. It depends on Mg(2+) as a cofactor. Post-translationally, 4'-phosphopantetheine is transferred from CoA to a specific serine of apo-EntB by EntD. Holo-EntB so formed is then acylated with 2,3-dihydroxybenzoate in a reaction catalyzed by EntE.

The protein localises to the cytoplasm. The catalysed reaction is 3 2,3-dihydroxybenzoate + 3 L-serine + 6 ATP = enterobactin + 6 AMP + 6 diphosphate + 4 H(+). It carries out the reaction isochorismate + H2O = (2S,3S)-2,3-dihydroxy-2,3-dihydrobenzoate + pyruvate. It functions in the pathway siderophore biosynthesis; enterobactin biosynthesis. Involved in the biosynthesis of the siderophore enterobactin (enterochelin), which is a macrocyclic trimeric lactone of N-(2,3-dihydroxybenzoyl)-serine. The serine trilactone serves as a scaffolding for the three catechol functionalities that provide hexadentate coordination for the tightly ligated iron(3+) atoms. EntB is a bifunctional protein that serves as an isochorismate lyase and an aryl carrier protein (ArCP). Catalyzes the conversion of isochorismate to 2,3-dihydro-2,3-dihydroxybenzoate (2,3-diDHB), the precursor of 2,3-dihydroxybenzoate (DHB). In the enterobactin assembly, EntB functions as an aryl carrier protein phosphopantetheinylated near the C terminus by EntD to yield holo-EntB, which is then acylated by EntE with 2,3-dihydroxybenzoyl-AMP to form DHB-holo-EntB. Then this product will serve in the formation of the amide bond between 2,3-dihydroxybenzoate (DHB) and L-serine. In Escherichia coli O157:H7, this protein is Enterobactin synthase component B.